A 706-amino-acid polypeptide reads, in one-letter code: Envelope glycoprotein H (706 aa).

The first 18 residues, 1–18, serve as a signal peptide directing secretion; that stretch reads MQLLCVFCLVLLWEVGAA. At 19–682 the chain is on the virion surface side; sequence SLSEVKLHLD…LYEERAHVVL (664 aa). Asn-60 carries N-linked (GlcNAc...) asparagine; by host glycosylation. An interaction with gL region spans residues 165–229; it reads DKFQYTGAMT…QSGDYSLVIV (65 aa). Cys-278 and Cys-335 are joined by a disulfide. An N-linked (GlcNAc...) asparagine; by host glycan is attached at Asn-435. 2 cysteine pairs are disulfide-bonded: Cys-454–Cys-478 and Cys-534–Cys-587. Asn-549 and Asn-604 each carry an N-linked (GlcNAc...) asparagine; by host glycan. An intrachain disulfide couples Cys-612 to Cys-615. A glycan (N-linked (GlcNAc...) asparagine; by host) is linked at Asn-664. Residues 683–703 form a helical membrane-spanning segment; that stretch reads AIILYFIAFALGIFLVHKIVM. Residues 704-706 are Intravirion-facing; the sequence is FFL.

This sequence belongs to the herpesviridae glycoprotein H family. In terms of assembly, interacts with glycoprotein L (gL); this interaction is necessary for the correct processing and cell surface expression of gH. The heterodimer gH/gL seems to interact with gB trimers during fusion. The heterodimer gH/gL interacts with host EPHA2 to facilitate virus internalization and fusion. Interacts with glycoprotein 42/BZLF2. N-glycosylated, O-glycosylated, and sialylated.

Its subcellular location is the virion membrane. The protein localises to the host cell membrane. It localises to the host endosome membrane. In terms of biological role, the heterodimer glycoprotein H-glycoprotein L is required for the fusion of viral and plasma membranes leading to virus entry into the host cell. Following initial binding to host receptor, membrane fusion is mediated by the fusion machinery composed of gB and the heterodimer gH/gL. May also be involved in the fusion between the virion envelope and the outer nuclear membrane during virion morphogenesis. The heterodimer gH/gL targets also host EPHA2 to promote viral entry. The polypeptide is Envelope glycoprotein H (Homo sapiens (Human)).